Here is a 218-residue protein sequence, read N- to C-terminus: Small ribosomal subunit protein uS3c (218 aa).

One can recognise a KH type-2 domain in the interval 43 to 118 (IKNYVQKNMR…KLNIAITRIA (76 aa)).

The protein belongs to the universal ribosomal protein uS3 family. As to quaternary structure, part of the 30S ribosomal subunit.

It localises to the plastid. Its subcellular location is the chloroplast. This chain is Small ribosomal subunit protein uS3c (rps3), found in Buxus microphylla (Littleleaf boxwood).